The primary structure comprises 172 residues: Signal peptidase complex catalytic subunit SEC11 (172 aa).

At 1–14 (MLSSLANPRQAASQ) the chain is on the cytoplasmic side. Residues 15 to 35 (LLNFALILSTAFMMWKGLSVV) traverse the membrane as a helical; Signal-anchor for type II membrane protein segment. Over 36 to 172 (SDSPSPIVVV…MGLVVVLQRE (137 aa)) the chain is Lumenal. Catalysis depends on charge relay system residues serine 49, histidine 90, and aspartate 115. The tract at residues 158–169 (AMLGIMGLVVVL) is C-terminal short (CTS) helix.

The protein belongs to the peptidase S26B family. Component of the signal peptidase complex (SPC) composed of a catalytic subunit SEC11 and three accessory subunits SPC1, SPC2 and SPC3. The complex induces a local thinning of the ER membrane which is used to measure the length of the signal peptide (SP) h-region of protein substrates. This ensures the selectivity of the complex towards h-regions shorter than 18-20 amino acids. SPC associates with the translocon complex.

Its subcellular location is the endoplasmic reticulum membrane. It catalyses the reaction Cleavage of hydrophobic, N-terminal signal or leader sequences from secreted and periplasmic proteins.. In terms of biological role, catalytic component of the signal peptidase complex (SPC) which catalyzes the cleavage of N-terminal signal sequences from nascent proteins as they are translocated into the lumen of the endoplasmic reticulum. Specifically cleaves N-terminal signal peptides that contain a hydrophobic alpha-helix (h-region) shorter than 18-20 amino acids. In Colletotrichum graminicola (strain M1.001 / M2 / FGSC 10212) (Maize anthracnose fungus), this protein is Signal peptidase complex catalytic subunit SEC11 (SEC11).